The primary structure comprises 61 residues: UPF0181 protein KPN78578_22920 (61 aa).

The protein belongs to the UPF0181 family.

This is UPF0181 protein KPN78578_22920 from Klebsiella pneumoniae subsp. pneumoniae (strain ATCC 700721 / MGH 78578).